A 122-amino-acid chain; its full sequence is Large ribosomal subunit protein uL14 (122 aa).

It belongs to the universal ribosomal protein uL14 family. As to quaternary structure, part of the 50S ribosomal subunit. Forms a cluster with proteins L3 and L19. In the 70S ribosome, L14 and L19 interact and together make contacts with the 16S rRNA in bridges B5 and B8.

Functionally, binds to 23S rRNA. Forms part of two intersubunit bridges in the 70S ribosome. This is Large ribosomal subunit protein uL14 from Staphylococcus epidermidis (strain ATCC 35984 / DSM 28319 / BCRC 17069 / CCUG 31568 / BM 3577 / RP62A).